Here is a 147-residue protein sequence, read N- to C-terminus: Hemoglobin subunit beta-2 (147 aa).

Positions His3–Asn147 constitute a Globin domain. Residues His64 and His93 each contribute to the heme b site.

This sequence belongs to the globin family. As to quaternary structure, heterotetramer of two alpha chains and two beta chains. Red blood cells.

Its function is as follows. Involved in oxygen transport from the lung to the various peripheral tissues. The polypeptide is Hemoglobin subunit beta-2 (hbb2) (Xenopus laevis (African clawed frog)).